The sequence spans 223 residues: Ribonuclease DdI (223 aa).

An N-terminal signal peptide occupies residues 1 to 25 (MRLIAALLSVLLIASTAQSTVTIYE). Cysteine 46 and cysteine 51 form a disulfide bridge. Active-site residues include histidine 63, glutamate 113, and histidine 117. Cysteine 78 and cysteine 120 are joined by a disulfide. Residue asparagine 144 is glycosylated (N-linked (GlcNAc...) asparagine). 2 disulfide bridges follow: cysteine 183–cysteine 213 and cysteine 194–cysteine 205.

The protein belongs to the RNase T2 family.

The protein localises to the lysosome. The catalysed reaction is a ribonucleotidyl-ribonucleotide-RNA + H2O = a 3'-end 3'-phospho-ribonucleotide-RNA + a 5'-end dephospho-ribonucleoside-RNA + H(+). Its activity is regulated as follows. Inhibited by Cu(2+) and Zn(2+). In terms of biological role, releases mononucleotides from RNA in the order of 3'-GMP &gt; 3'-UMP &gt; 3'-AMP &gt; 3'-CMP. The polypeptide is Ribonuclease DdI (ddiA) (Dictyostelium discoideum (Social amoeba)).